The primary structure comprises 559 residues: Protein pp71 (559 aa).

Residue Cys-218 is modified to S-nitrosocysteine; by host. Phosphothreonine is present on Thr-223. Disordered stretches follow at residues 404–440 and 530–559; these read EFLPQSPGLPPTEEEEEEEEEDDEDDLSSTPTPTPLS and SSTLRSVPAPRPSPISTASTSSTPRSRPRI. Over residues 415–430 the composition is skewed to acidic residues; it reads TEEEEEEEEEDDEDDL. 2 stretches are compositionally biased toward low complexity: residues 431–440 and 543–559; these read SSTPTPTPLS and PISTASTSSTPRSRPRI.

Belongs to the herpesviridae pp71 family. As to quaternary structure, interacts with the host protein DAXX; this interaction takes place at ND10 and induces the reversal of DAXX-mediated repression of viral transcription. Interacts with UL35. Interacts with host TMEM173/STING1; this interaction inhibits the cGAS/STING pathway. Interacts with host RB1; this interaction mediates RB1 proteasomal degradation. S-nitrosylation limits ability to undermine the cGAS/STING antiviral pathway.

The protein resides in the virion tegument. Its subcellular location is the host nucleus. It localises to the host endoplasmic reticulum. Functionally, stimulates viral immediate-early (IE) transcription. Plays a role in the inhibition of the host innate repsonse by targeting STING1 and thus the cGAS-STING pathway. Also counteracts host DAXX-mediated repression of viral transcription. Displaces a DAXX-binding protein, ATRX, from nuclear domain 10 sites (ND10) shortly after infection. Increases the basal level of SUMOylated DAXX in infected cells. Stimulates quiescent cells to re-enter the cell cycle, proceed through G1 and enter the S phase. Interacts with hypophosphorylated forms of RB1 and induces their degradation by the proteasome without involving ubiquitin conjugation. The sequence is that of Protein pp71 (UL82) from Human cytomegalovirus (strain AD169) (HHV-5).